The primary structure comprises 827 residues: Stage II sporulation protein E (827 aa).

The next 10 membrane-spanning stretches (helical) occupy residues 49-69, 71-91, 116-136, 142-162, 175-195, 206-226, 247-267, 269-289, 299-319, and 320-340; these read IGFLLGRAFILSEVLPFALPF, GAMLLIRRDKAFYAVLAVLAG, VAAFITDDRVKALPIVVFFSM, GFVYAQNGVFTTYDYVMAIVE, QSLPIFTVKKVKQSLKIEEII, TGLAGLSYQGMQAEHILARYV, GLILGLANIGNLYQMSLLAFS, LLGGLLKEGKKAGAAIGLIVG, GSAGLMTTLYESLIAVCLFLL, and TPQSITRKVARYIPGTVEHLQ. Topologically, residues 341–827 are cytoplasmic; that stretch reads EQQQYARKIR…AIFQNKQEIS (487 aa). The 211-residue stretch at 594–804 folds into the PPM-type phosphatase domain; it reads STGAAHAAKG…DDMTVVVVRI (211 aa).

The cofactor is Mn(2+).

It is found in the cell membrane. It carries out the reaction O-phospho-L-seryl-[protein] + H2O = L-seryl-[protein] + phosphate. It catalyses the reaction O-phospho-L-threonyl-[protein] + H2O = L-threonyl-[protein] + phosphate. In terms of biological role, normally needed for pro-sigma E processing during sporulation but can be bypassed in vegetative cells. Activates SpoIIAA by dephosphorylation. The protein is Stage II sporulation protein E (spoIIE) of Bacillus subtilis (strain 168).